A 312-amino-acid polypeptide reads, in one-letter code: UDP-N-acetylenolpyruvoylglucosamine reductase (312 aa).

Residues 24 to 206 (GIGGPADLFA…SADILKVRNE (183 aa)) form the FAD-binding PCMH-type domain. Arg-166 is an active-site residue. The active-site Proton donor is the Ser-217. Residue Glu-307 is part of the active site.

The protein belongs to the MurB family. The cofactor is FAD.

It is found in the cytoplasm. It carries out the reaction UDP-N-acetyl-alpha-D-muramate + NADP(+) = UDP-N-acetyl-3-O-(1-carboxyvinyl)-alpha-D-glucosamine + NADPH + H(+). It functions in the pathway cell wall biogenesis; peptidoglycan biosynthesis. Its function is as follows. Cell wall formation. This chain is UDP-N-acetylenolpyruvoylglucosamine reductase, found in Solibacter usitatus (strain Ellin6076).